Reading from the N-terminus, the 145-residue chain is Bacilliredoxin SH1401 (145 aa).

The protein belongs to the bacilliredoxin family.

The chain is Bacilliredoxin SH1401 from Staphylococcus haemolyticus (strain JCSC1435).